The sequence spans 64 residues: Probable cytochrome c oxidase subunit 5C-1 (64 aa).

The chain crosses the membrane as a helical span at residues 15–34; the sequence is SVVKELFIGLALGLAAGGLW.

Belongs to the cytochrome c oxidase subunit 5C family.

Its subcellular location is the mitochondrion inner membrane. This protein is one of the nuclear-coded polypeptide chains of cytochrome c oxidase, the terminal oxidase in mitochondrial electron transport. The protein is Probable cytochrome c oxidase subunit 5C-1 of Arabidopsis thaliana (Mouse-ear cress).